The sequence spans 193 residues: Ion-translocating oxidoreductase complex subunit A (193 aa).

6 consecutive transmembrane segments (helical) span residues 5–25 (FLLFVGTVLVNNFVLVKFLGL), 39–59 (IGMGFATTFVMTLASVCSWLV), 62–82 (FILLPLDLIYLRTLSFILVIA), 102–122 (LLGIFLPLITTNCAVLGVALL), 134–154 (AIYGFGAAAGFSLVMVLFAAI), and 171–191 (SIGLITAGLMSLAFMGFSGLV).

Belongs to the NqrDE/RnfAE family. As to quaternary structure, the complex is composed of six subunits: RnfA, RnfB, RnfC, RnfD, RnfE and RnfG.

It is found in the cell inner membrane. Part of a membrane-bound complex that couples electron transfer with translocation of ions across the membrane. This is Ion-translocating oxidoreductase complex subunit A from Photorhabdus laumondii subsp. laumondii (strain DSM 15139 / CIP 105565 / TT01) (Photorhabdus luminescens subsp. laumondii).